Here is a 207-residue protein sequence, read N- to C-terminus: ATP-dependent Clp protease proteolytic subunit (207 aa).

Catalysis depends on serine 111, which acts as the Nucleophile. Histidine 136 is an active-site residue.

Belongs to the peptidase S14 family. Fourteen ClpP subunits assemble into 2 heptameric rings which stack back to back to give a disk-like structure with a central cavity, resembling the structure of eukaryotic proteasomes.

It localises to the cytoplasm. It catalyses the reaction Hydrolysis of proteins to small peptides in the presence of ATP and magnesium. alpha-casein is the usual test substrate. In the absence of ATP, only oligopeptides shorter than five residues are hydrolyzed (such as succinyl-Leu-Tyr-|-NHMec, and Leu-Tyr-Leu-|-Tyr-Trp, in which cleavage of the -Tyr-|-Leu- and -Tyr-|-Trp bonds also occurs).. Its function is as follows. Cleaves peptides in various proteins in a process that requires ATP hydrolysis. Has a chymotrypsin-like activity. Plays a major role in the degradation of misfolded proteins. In Proteus mirabilis (strain HI4320), this protein is ATP-dependent Clp protease proteolytic subunit.